Consider the following 275-residue polypeptide: Large ribosomal subunit protein uL2 (275 aa).

The segment at 223-275 (VAMNPVDHPHGGGEGRTSGGRHPVTPWGVPTKGYKTRSNKRTDKYIVRRRNKK) is disordered.

Belongs to the universal ribosomal protein uL2 family. Part of the 50S ribosomal subunit. Forms a bridge to the 30S subunit in the 70S ribosome.

One of the primary rRNA binding proteins. Required for association of the 30S and 50S subunits to form the 70S ribosome, for tRNA binding and peptide bond formation. It has been suggested to have peptidyltransferase activity; this is somewhat controversial. Makes several contacts with the 16S rRNA in the 70S ribosome. This is Large ribosomal subunit protein uL2 from Shewanella loihica (strain ATCC BAA-1088 / PV-4).